The primary structure comprises 335 residues: Large ribosomal subunit protein uL10 (335 aa).

The disordered stretch occupies residues 306–335 (VEETVEEEEEEEEEEDAEEEAAAGLGALFG). The segment covering 308–326 (ETVEEEEEEEEEEDAEEEA) has biased composition (acidic residues).

It belongs to the universal ribosomal protein uL10 family. In terms of assembly, part of the 50S ribosomal subunit. Forms part of the ribosomal stalk which helps the ribosome interact with GTP-bound translation factors. Forms a heptameric L10(L12)2(L12)2(L12)2 complex, where L10 forms an elongated spine to which the L12 dimers bind in a sequential fashion.

Forms part of the ribosomal stalk, playing a central role in the interaction of the ribosome with GTP-bound translation factors. The polypeptide is Large ribosomal subunit protein uL10 (Methanobrevibacter smithii (strain ATCC 35061 / DSM 861 / OCM 144 / PS)).